Consider the following 393-residue polypeptide: Autophagy-related protein 18c (393 aa).

4 WD repeats span residues 27–65 (KEEA…ETFR), 70–114 (DGGF…CISE), 199–239 (AHDS…RLQE), and 244–283 (VDRA…VGED).

The protein belongs to the WD repeat PROPPIN family. As to quaternary structure, component of the PI(3,5)P2 regulatory complex at least composed of ATG18, SAC/FIG4, FAB1 and VAC14. As to expression, expressed in roots, stems, flowers and leaves.

The protein localises to the preautophagosomal structure membrane. It is found in the vacuole membrane. The PI(3,5)P2 regulatory complex regulates both the synthesis and turnover of phosphatidylinositol 3,5-bisphosphate (PtdIns(3,5)P2). Required for autophagy. The protein is Autophagy-related protein 18c (ATG18C) of Arabidopsis thaliana (Mouse-ear cress).